Reading from the N-terminus, the 229-residue chain is Small ribosomal subunit protein uS2c (229 aa).

This sequence belongs to the universal ribosomal protein uS2 family.

It localises to the plastid. It is found in the chloroplast. This is Small ribosomal subunit protein uS2c (rps2) from Trieres chinensis (Marine centric diatom).